The chain runs to 295 residues: Protease HtpX (295 aa).

The next 2 membrane-spanning stretches (helical) occupy residues Ile-4–Leu-24 and Gly-41–Ile-61. His-147 is a Zn(2+) binding site. Residue Glu-148 is part of the active site. His-151 contacts Zn(2+). Helical transmembrane passes span Val-158–Ile-178 and Phe-198–Trp-218. Glu-224 contributes to the Zn(2+) binding site.

This sequence belongs to the peptidase M48B family. Zn(2+) serves as cofactor.

The protein localises to the cell inner membrane. The sequence is that of Protease HtpX from Pseudomonas entomophila (strain L48).